The following is a 521-amino-acid chain: MNNMKRSKKPRVSWPPGPKLCQVKVFRTEDSPANVASQPQRHSYPSRKPRGPDLPPGFEGNHYAVKPNVSNIPRIKWKRPPPKFSVNDTWLVGCGGGSSEWQNENLRISKVLEAIYPHRSAIPSRPSVSPAVEAECFDDSKTPAIRLTPIEDESESSSEESSNSKVESGVTANKQGQLETKPLCSTQEQVSGLTGLAPDLSLAASAALTALMKTKEQGSLVDTELLIKFLSDPKLIKNLITDTSGKSSETKNQPIVTNINSATRPVPQPVSAVTASPMARKPQPVIIPQEHSVAVSRSFTNPERRVSPPKPVNGSISPPKPITGKPSSIPMPVHFHVGIAKEQPQPARFPSSSLPMNLNFHRPPNVFSEPKVIVNPQPQHQPYSAFRTSEMNYVQSSIGLGRGPQTGFNSYPMNFSRADAIGSAKPVVQPMKGLDYFKNLIREHGTDNHETNQYHSQTGIFNGRIDNNNKIHQQCIYFGTANGCNMGDSCTYVHDRYRPNFEAAAPRAKRMKFGRYERNGF.

Disordered regions lie at residues threonine 28–glycine 60, threonine 142–serine 185, and serine 296–proline 319. Residues asparagine 34–serine 43 show a composition bias toward polar residues. Over residues glutamate 159 to serine 168 the composition is skewed to low complexity. Polar residues predominate over residues valine 170–serine 185. Residues asparagine 469 to tyrosine 497 form a C3H1-type zinc finger.

This chain is Zinc finger CCCH domain-containing protein 45, found in Arabidopsis thaliana (Mouse-ear cress).